The primary structure comprises 954 residues: Glycine dehydrogenase (decarboxylating) (954 aa).

K706 is modified (N6-(pyridoxal phosphate)lysine).

It belongs to the GcvP family. As to quaternary structure, the glycine cleavage system is composed of four proteins: P, T, L and H. Pyridoxal 5'-phosphate serves as cofactor.

The catalysed reaction is N(6)-[(R)-lipoyl]-L-lysyl-[glycine-cleavage complex H protein] + glycine + H(+) = N(6)-[(R)-S(8)-aminomethyldihydrolipoyl]-L-lysyl-[glycine-cleavage complex H protein] + CO2. The glycine cleavage system catalyzes the degradation of glycine. The P protein binds the alpha-amino group of glycine through its pyridoxal phosphate cofactor; CO(2) is released and the remaining methylamine moiety is then transferred to the lipoamide cofactor of the H protein. The chain is Glycine dehydrogenase (decarboxylating) from Pseudomonas syringae pv. syringae (strain B728a).